Consider the following 274-residue polypeptide: 4-hydroxy-tetrahydrodipicolinate reductase (274 aa).

NAD(+)-binding positions include 11–16 (GGSGRM) and Glu-37. Residue Arg-38 participates in NADP(+) binding. NAD(+) is bound by residues 101-103 (GTT) and 125-128 (APNM). The Proton donor/acceptor role is filled by His-158. His-159 contributes to the (S)-2,3,4,5-tetrahydrodipicolinate binding site. Catalysis depends on Lys-162, which acts as the Proton donor. 168–169 (GT) serves as a coordination point for (S)-2,3,4,5-tetrahydrodipicolinate.

Belongs to the DapB family.

It is found in the cytoplasm. It catalyses the reaction (S)-2,3,4,5-tetrahydrodipicolinate + NAD(+) + H2O = (2S,4S)-4-hydroxy-2,3,4,5-tetrahydrodipicolinate + NADH + H(+). The enzyme catalyses (S)-2,3,4,5-tetrahydrodipicolinate + NADP(+) + H2O = (2S,4S)-4-hydroxy-2,3,4,5-tetrahydrodipicolinate + NADPH + H(+). The protein operates within amino-acid biosynthesis; L-lysine biosynthesis via DAP pathway; (S)-tetrahydrodipicolinate from L-aspartate: step 4/4. In terms of biological role, catalyzes the conversion of 4-hydroxy-tetrahydrodipicolinate (HTPA) to tetrahydrodipicolinate. This chain is 4-hydroxy-tetrahydrodipicolinate reductase, found in Shewanella pealeana (strain ATCC 700345 / ANG-SQ1).